The primary structure comprises 318 residues: GTP cyclohydrolase MptA (318 aa).

This sequence belongs to the GTP cyclohydrolase IV family. In terms of assembly, homodimer. Fe(2+) serves as cofactor.

The catalysed reaction is GTP + H2O = 7,8-dihydroneopterin 2',3'-cyclic phosphate + formate + diphosphate + H(+). The protein operates within cofactor biosynthesis; 5,6,7,8-tetrahydromethanopterin biosynthesis. Its function is as follows. Converts GTP to 7,8-dihydro-D-neopterin 2',3'-cyclic phosphate, the first intermediate in the biosynthesis of coenzyme methanopterin. This Methanosarcina acetivorans (strain ATCC 35395 / DSM 2834 / JCM 12185 / C2A) protein is GTP cyclohydrolase MptA.